A 215-amino-acid chain; its full sequence is UPF0502 protein YceH (215 aa).

This sequence belongs to the UPF0502 family.

This Salmonella paratyphi A (strain ATCC 9150 / SARB42) protein is UPF0502 protein YceH.